A 184-amino-acid chain; its full sequence is MAAKKSTPTDSGKSKGKKNKAQKGAGQKGAGQIVVATNRKARHDYHIIDTYECGVVLVGTEVKSLREGKASLVDAYATIDEGEVWLRGLHIPEYSMGHWTNHSPRRTRKLLLHRREIDSLMGKVRDGNNTLVPLQLYFVAGKLKVELALARGKQEYDKRQDIKRRTEEREITREMGRRIKGIQG.

The segment covering 1–11 (MAAKKSTPTDS) has biased composition (polar residues). Positions 1–31 (MAAKKSTPTDSGKSKGKKNKAQKGAGQKGAG) are disordered.

This sequence belongs to the SmpB family.

The protein resides in the cytoplasm. Required for rescue of stalled ribosomes mediated by trans-translation. Binds to transfer-messenger RNA (tmRNA), required for stable association of tmRNA with ribosomes. tmRNA and SmpB together mimic tRNA shape, replacing the anticodon stem-loop with SmpB. tmRNA is encoded by the ssrA gene; the 2 termini fold to resemble tRNA(Ala) and it encodes a 'tag peptide', a short internal open reading frame. During trans-translation Ala-aminoacylated tmRNA acts like a tRNA, entering the A-site of stalled ribosomes, displacing the stalled mRNA. The ribosome then switches to translate the ORF on the tmRNA; the nascent peptide is terminated with the 'tag peptide' encoded by the tmRNA and targeted for degradation. The ribosome is freed to recommence translation, which seems to be the essential function of trans-translation. The chain is SsrA-binding protein from Corynebacterium jeikeium (strain K411).